The sequence spans 466 residues: tRNA-2-methylthio-N(6)-dimethylallyladenosine synthase (466 aa).

An MTTase N-terminal domain is found at 5–125 (RKLHIKSYGC…LPELLARAGR (121 aa)). Residues Cys-14, Cys-50, Cys-88, Cys-166, Cys-170, and Cys-173 each contribute to the [4Fe-4S] cluster site. One can recognise a Radical SAM core domain in the interval 152-384 (RARGVSAFVT…QSLIDSQQAA (233 aa)). In terms of domain architecture, TRAM spans 387 to 449 (KAAIGTVVDV…RYSLLGELVA (63 aa)).

Belongs to the methylthiotransferase family. MiaB subfamily. As to quaternary structure, monomer. [4Fe-4S] cluster is required as a cofactor.

The protein localises to the cytoplasm. The catalysed reaction is N(6)-dimethylallyladenosine(37) in tRNA + (sulfur carrier)-SH + AH2 + 2 S-adenosyl-L-methionine = 2-methylsulfanyl-N(6)-dimethylallyladenosine(37) in tRNA + (sulfur carrier)-H + 5'-deoxyadenosine + L-methionine + A + S-adenosyl-L-homocysteine + 2 H(+). Catalyzes the methylthiolation of N6-(dimethylallyl)adenosine (i(6)A), leading to the formation of 2-methylthio-N6-(dimethylallyl)adenosine (ms(2)i(6)A) at position 37 in tRNAs that read codons beginning with uridine. The polypeptide is tRNA-2-methylthio-N(6)-dimethylallyladenosine synthase (Bradyrhizobium sp. (strain BTAi1 / ATCC BAA-1182)).